The chain runs to 392 residues: Succinate--CoA ligase [ADP-forming] subunit beta (392 aa).

An ATP-grasp domain is found at 9–236 (RDLFERHGLP…QAAVDPLEQA (228 aa)). ATP is bound by residues lysine 45, 52–54 (GRG), alanine 94, and glutamate 99. Residues asparagine 191 and aspartate 205 each contribute to the Mg(2+) site. Substrate is bound by residues asparagine 256 and 318–320 (GIT).

Belongs to the succinate/malate CoA ligase beta subunit family. As to quaternary structure, heterotetramer of two alpha and two beta subunits. Mg(2+) serves as cofactor.

The enzyme catalyses succinate + ATP + CoA = succinyl-CoA + ADP + phosphate. It carries out the reaction GTP + succinate + CoA = succinyl-CoA + GDP + phosphate. Its pathway is carbohydrate metabolism; tricarboxylic acid cycle; succinate from succinyl-CoA (ligase route): step 1/1. Succinyl-CoA synthetase functions in the citric acid cycle (TCA), coupling the hydrolysis of succinyl-CoA to the synthesis of either ATP or GTP and thus represents the only step of substrate-level phosphorylation in the TCA. The beta subunit provides nucleotide specificity of the enzyme and binds the substrate succinate, while the binding sites for coenzyme A and phosphate are found in the alpha subunit. The protein is Succinate--CoA ligase [ADP-forming] subunit beta of Salinispora tropica (strain ATCC BAA-916 / DSM 44818 / JCM 13857 / NBRC 105044 / CNB-440).